A 285-amino-acid polypeptide reads, in one-letter code: UstYa family oxidase phomYe (285 aa).

A helical transmembrane segment spans residues 32–54 (LFYGWKGIAFLSTLTNVLFISGF). The interval 143–165 (YGFGTPLTGPGSEGNEHDPTPWT) is disordered. Residues 177 to 181 (HQLHC) carry the HXXHC 1 motif. N202 carries N-linked (GlcNAc...) asparagine glycosylation. The HXXHC 2 signature appears at 209–213 (HVDHC).

The protein belongs to the ustYa family.

It localises to the membrane. It participates in mycotoxin biosynthesis. In terms of biological role, ustYa family oxidase; part of the gene cluster that mediates the biosynthesis of the phomopsins, a group of hexapeptide mycotoxins which infects lupins and causes lupinosis disease in livestock. Within the pathway, phomYe catalyzes the desaturation of the Pro moiety into 3,4-dehydroproline (dPro). The pathway starts with the processing of the precursor phomA by several endopeptidases including kexin proteases as well as the cluster-specific S41 family peptidase phomP1 and the oligopeptidase phomG to produce 10 identical copies of the hexapeptide Tyr-Val-Ile-Pro-Ile-Asp. After being excised from the precursor peptide, the core peptides are cyclized and modified post-translationally by enzymes encoded within the gene cluster. The timing and order of proteolysis of the phomA precursor and PTMs are still unknown. Two tyrosinase-like enzymes, phomQ1 and phomQ2, catalyze the chlorination and hydroxylation of Tyr, respectively. PhomYb, is proposed to be involved in the construction of the macrocyclic structure. The other 4 ustYa family proteins may be involved in PTMs that generate the unique structure of phomopsin A. PhomYa is required for the hydroxylation of C-beta of Tyr. PhomYc, phomYd, and phomYe are responsible for the biosynthesis of 2,3-dehydroisoleucine (dIle), 2,3-dehydroaspartic acid (dAsp), and 3,4-dehydroproline (dPro), respectively. While dIle formation by phomYc is indispensable for the installation of dAsp by phomYd, the order of the other PTMs have not been elucidated yet. Most of the biosynthetic enzymes likely have broad substrate specificity, and thus, there might be a metabolic grid from a precursor to phomopsin A. The enzyme(s) responsible for the biosynthesis of 3,4-dehydrovaline (dVal) have also not been identified yet. Finally, phomM acts as an S-adenosylmethionine-dependent alpha-N-methyltransferase that catalyzes two successive N-methylation reactions, converting N-desmethyl-phomopsin A to phomopsin A and phomopsin A further to an N,N-dimethylated congener called phomopsin E. The polypeptide is UstYa family oxidase phomYe (Diaporthe leptostromiformis (Lupinosis disease fungus)).